The primary structure comprises 336 residues: 4-hydroxy-3-methylbut-2-enyl diphosphate reductase (336 aa).

Cys-37 contributes to the [4Fe-4S] cluster binding site. Residues His-66 and His-99 each coordinate (2E)-4-hydroxy-3-methylbut-2-enyl diphosphate. 2 residues coordinate dimethylallyl diphosphate: His-66 and His-99. Isopentenyl diphosphate-binding residues include His-66 and His-99. Cys-121 lines the [4Fe-4S] cluster pocket. His-149 serves as a coordination point for (2E)-4-hydroxy-3-methylbut-2-enyl diphosphate. A dimethylallyl diphosphate-binding site is contributed by His-149. Position 149 (His-149) interacts with isopentenyl diphosphate. Glu-151 (proton donor) is an active-site residue. Thr-189 serves as a coordination point for (2E)-4-hydroxy-3-methylbut-2-enyl diphosphate. Cys-219 is a binding site for [4Fe-4S] cluster. (2E)-4-hydroxy-3-methylbut-2-enyl diphosphate contacts are provided by Ser-247, Ser-248, Asn-249, and Ser-292. Ser-247, Ser-248, Asn-249, and Ser-292 together coordinate dimethylallyl diphosphate. The isopentenyl diphosphate site is built by Ser-247, Ser-248, Asn-249, and Ser-292.

This sequence belongs to the IspH family. [4Fe-4S] cluster is required as a cofactor.

The enzyme catalyses isopentenyl diphosphate + 2 oxidized [2Fe-2S]-[ferredoxin] + H2O = (2E)-4-hydroxy-3-methylbut-2-enyl diphosphate + 2 reduced [2Fe-2S]-[ferredoxin] + 2 H(+). The catalysed reaction is dimethylallyl diphosphate + 2 oxidized [2Fe-2S]-[ferredoxin] + H2O = (2E)-4-hydroxy-3-methylbut-2-enyl diphosphate + 2 reduced [2Fe-2S]-[ferredoxin] + 2 H(+). Its pathway is isoprenoid biosynthesis; dimethylallyl diphosphate biosynthesis; dimethylallyl diphosphate from (2E)-4-hydroxy-3-methylbutenyl diphosphate: step 1/1. It participates in isoprenoid biosynthesis; isopentenyl diphosphate biosynthesis via DXP pathway; isopentenyl diphosphate from 1-deoxy-D-xylulose 5-phosphate: step 6/6. Functionally, catalyzes the conversion of 1-hydroxy-2-methyl-2-(E)-butenyl 4-diphosphate (HMBPP) into a mixture of isopentenyl diphosphate (IPP) and dimethylallyl diphosphate (DMAPP). Acts in the terminal step of the DOXP/MEP pathway for isoprenoid precursor biosynthesis. In Rhodococcus jostii (strain RHA1), this protein is 4-hydroxy-3-methylbut-2-enyl diphosphate reductase.